The sequence spans 663 residues: 4-hydroxy-3-methylbut-2-en-1-yl diphosphate synthase (flavodoxin) (663 aa).

Residues Cys-568, Cys-571, Cys-602, and Glu-609 each contribute to the [4Fe-4S] cluster site.

This sequence belongs to the IspG family. The cofactor is [4Fe-4S] cluster.

It catalyses the reaction (2E)-4-hydroxy-3-methylbut-2-enyl diphosphate + oxidized [flavodoxin] + H2O + 2 H(+) = 2-C-methyl-D-erythritol 2,4-cyclic diphosphate + reduced [flavodoxin]. It participates in isoprenoid biosynthesis; isopentenyl diphosphate biosynthesis via DXP pathway; isopentenyl diphosphate from 1-deoxy-D-xylulose 5-phosphate: step 5/6. Functionally, converts 2C-methyl-D-erythritol 2,4-cyclodiphosphate (ME-2,4cPP) into 1-hydroxy-2-methyl-2-(E)-butenyl 4-diphosphate. The sequence is that of 4-hydroxy-3-methylbut-2-en-1-yl diphosphate synthase (flavodoxin) from Leptospira interrogans serogroup Icterohaemorrhagiae serovar copenhageni (strain Fiocruz L1-130).